The chain runs to 163 residues: Probable ribosome biogenesis protein RLP24 (163 aa).

The protein belongs to the eukaryotic ribosomal protein eL24 family. In terms of assembly, associated with nucleolar and cytoplasmic pre-60S particles. At the end of biogenesis it dissociates from cytoplasmic pre-60S particles and is likely to be exchanged for its ribosomal homolog, RPL24.

The protein resides in the nucleus. The protein localises to the nucleolus. Its function is as follows. Involved in the biogenesis of the 60S ribosomal subunit. Ensures the docking of GTPBP4/NOG1 to pre-60S particles. The protein is Probable ribosome biogenesis protein RLP24 (RSL24D1) of Pongo abelii (Sumatran orangutan).